We begin with the raw amino-acid sequence, 207 residues long: MARYLGPKAKLSRREGTDLFLKSARRSIQDKAKFDSKPGQHGRTSGQRTSDYGLQLREKQKVKRMYGVLEKQFRRYFEEADRRRGNTGANLLFILESRLDNVVYRMGFGSTRAEARQLVSHKAITVNGQSVNIPSYLVKTGDVIAVRDKSKKQTRIAEALQLAQQVGIPAWVEVNADKAEGTFKKVPDRDEFAADINESLIVELYSR.

A compositionally biased stretch (basic and acidic residues) spans 29–38 (QDKAKFDSKP). The interval 29–54 (QDKAKFDSKPGQHGRTSGQRTSDYGL) is disordered. Residues 42 to 52 (GRTSGQRTSDY) are compositionally biased toward polar residues. An S4 RNA-binding domain is found at 97-160 (SRLDNVVYRM…KKQTRIAEAL (64 aa)).

Belongs to the universal ribosomal protein uS4 family. Part of the 30S ribosomal subunit. Contacts protein S5. The interaction surface between S4 and S5 is involved in control of translational fidelity.

Functionally, one of the primary rRNA binding proteins, it binds directly to 16S rRNA where it nucleates assembly of the body of the 30S subunit. With S5 and S12 plays an important role in translational accuracy. This is Small ribosomal subunit protein uS4 from Variovorax paradoxus (strain S110).